A 165-amino-acid chain; its full sequence is Ribosome maturation factor RimM (165 aa).

The PRC barrel domain maps to 94–165 (EDEFYIADLT…YVILNYQREA (72 aa)).

Belongs to the RimM family. In terms of assembly, binds ribosomal protein uS19.

It is found in the cytoplasm. Functionally, an accessory protein needed during the final step in the assembly of 30S ribosomal subunit, possibly for assembly of the head region. Essential for efficient processing of 16S rRNA. May be needed both before and after RbfA during the maturation of 16S rRNA. It has affinity for free ribosomal 30S subunits but not for 70S ribosomes. The polypeptide is Ribosome maturation factor RimM (Rickettsia rickettsii (strain Iowa)).